Here is a 346-residue protein sequence, read N- to C-terminus: Nicotinate-nucleotide--dimethylbenzimidazole phosphoribosyltransferase (346 aa).

Catalysis depends on glutamate 313, which acts as the Proton acceptor.

This sequence belongs to the CobT family.

It carries out the reaction 5,6-dimethylbenzimidazole + nicotinate beta-D-ribonucleotide = alpha-ribazole 5'-phosphate + nicotinate + H(+). It participates in nucleoside biosynthesis; alpha-ribazole biosynthesis; alpha-ribazole from 5,6-dimethylbenzimidazole: step 1/2. In terms of biological role, catalyzes the synthesis of alpha-ribazole-5'-phosphate from nicotinate mononucleotide (NAMN) and 5,6-dimethylbenzimidazole (DMB). In Parabacteroides distasonis (strain ATCC 8503 / DSM 20701 / CIP 104284 / JCM 5825 / NCTC 11152), this protein is Nicotinate-nucleotide--dimethylbenzimidazole phosphoribosyltransferase.